The following is a 486-amino-acid chain: Ribulose bisphosphate carboxylase large chain (486 aa).

Substrate contacts are provided by Asn126 and Thr176. The active-site Proton acceptor is the Lys178. Lys180 contacts substrate. Positions 204, 206, and 207 each coordinate Mg(2+). Lys204 bears the N6-carboxylysine mark. Residue His296 is the Proton acceptor of the active site. Substrate is bound by residues Arg297, His329, and Ser381.

The protein belongs to the RuBisCO large chain family. Type I subfamily. Heterohexadecamer of 8 large chains and 8 small chains. Mg(2+) is required as a cofactor.

It carries out the reaction 2 (2R)-3-phosphoglycerate + 2 H(+) = D-ribulose 1,5-bisphosphate + CO2 + H2O. It catalyses the reaction D-ribulose 1,5-bisphosphate + O2 = 2-phosphoglycolate + (2R)-3-phosphoglycerate + 2 H(+). In terms of biological role, ruBisCO catalyzes two reactions: the carboxylation of D-ribulose 1,5-bisphosphate, the primary event in carbon dioxide fixation, as well as the oxidative fragmentation of the pentose substrate. Both reactions occur simultaneously and in competition at the same active site. The chain is Ribulose bisphosphate carboxylase large chain from Rhizobium meliloti (strain 1021) (Ensifer meliloti).